A 409-amino-acid polypeptide reads, in one-letter code: Elongation factor Tu, chloroplastic (409 aa).

The region spanning Lys-10 to Glu-214 is the tr-type G domain. The segment at Gly-19–Thr-26 is G1. Gly-19–Thr-26 is a GTP binding site. Position 26 (Thr-26) interacts with Mg(2+). The G2 stretch occupies residues Gly-60–Asn-64. The interval Asp-81–Gly-84 is G3. GTP contacts are provided by residues Asp-81–His-85 and Asn-136–Asp-139. Residues Asn-136 to Asp-139 form a G4 region. Residues Ser-174–Leu-176 are G5.

It belongs to the TRAFAC class translation factor GTPase superfamily. Classic translation factor GTPase family. EF-Tu/EF-1A subfamily.

It localises to the plastid. It is found in the chloroplast. It catalyses the reaction GTP + H2O = GDP + phosphate + H(+). Its function is as follows. GTP hydrolase that promotes the GTP-dependent binding of aminoacyl-tRNA to the A-site of ribosomes during protein biosynthesis. In Porphyra purpurea (Red seaweed), this protein is Elongation factor Tu, chloroplastic (tufA).